Consider the following 209-residue polypeptide: Orotate phosphoribosyltransferase (209 aa).

Residues Arg96, Lys100, His102, and 122–130 (EDLISTGGS) each bind 5-phospho-alpha-D-ribose 1-diphosphate. Ser126 serves as a coordination point for orotate.

This sequence belongs to the purine/pyrimidine phosphoribosyltransferase family. PyrE subfamily. As to quaternary structure, homodimer. The cofactor is Mg(2+).

The enzyme catalyses orotidine 5'-phosphate + diphosphate = orotate + 5-phospho-alpha-D-ribose 1-diphosphate. The protein operates within pyrimidine metabolism; UMP biosynthesis via de novo pathway; UMP from orotate: step 1/2. Catalyzes the transfer of a ribosyl phosphate group from 5-phosphoribose 1-diphosphate to orotate, leading to the formation of orotidine monophosphate (OMP). This is Orotate phosphoribosyltransferase from Listeria innocua serovar 6a (strain ATCC BAA-680 / CLIP 11262).